A 196-amino-acid polypeptide reads, in one-letter code: Nodulation protein A (196 aa).

Belongs to the NodA family.

It localises to the cytoplasm. In terms of biological role, N-acyltransferase required for nodulation. Acts in the production of a small, heat-stable compound (Nod) that stimulates mitosis in various plant protoplasts. This is Nodulation protein A from Mesorhizobium plurifarium.